The sequence spans 309 residues: Tagatose-6-phosphate kinase (309 aa).

Belongs to the carbohydrate kinase PfkB family. LacC subfamily.

It catalyses the reaction D-tagatofuranose 6-phosphate + ATP = D-tagatofuranose 1,6-bisphosphate + ADP + H(+). It functions in the pathway carbohydrate metabolism; D-tagatose 6-phosphate degradation; D-glyceraldehyde 3-phosphate and glycerone phosphate from D-tagatose 6-phosphate: step 1/2. This chain is Tagatose-6-phosphate kinase, found in Streptococcus pneumoniae serotype 4 (strain ATCC BAA-334 / TIGR4).